Here is a 354-residue protein sequence, read N- to C-terminus: S-adenosylmethionine:tRNA ribosyltransferase-isomerase (354 aa).

It belongs to the QueA family. As to quaternary structure, monomer.

It localises to the cytoplasm. It carries out the reaction 7-aminomethyl-7-carbaguanosine(34) in tRNA + S-adenosyl-L-methionine = epoxyqueuosine(34) in tRNA + adenine + L-methionine + 2 H(+). It participates in tRNA modification; tRNA-queuosine biosynthesis. Transfers and isomerizes the ribose moiety from AdoMet to the 7-aminomethyl group of 7-deazaguanine (preQ1-tRNA) to give epoxyqueuosine (oQ-tRNA). The sequence is that of S-adenosylmethionine:tRNA ribosyltransferase-isomerase from Klebsiella pneumoniae (strain 342).